A 58-amino-acid polypeptide reads, in one-letter code: Large ribosomal subunit protein uL30 (58 aa).

It belongs to the universal ribosomal protein uL30 family. In terms of assembly, part of the 50S ribosomal subunit.

The polypeptide is Large ribosomal subunit protein uL30 (Porphyromonas gingivalis (strain ATCC 33277 / DSM 20709 / CIP 103683 / JCM 12257 / NCTC 11834 / 2561)).